A 430-amino-acid chain; its full sequence is Enolase (430 aa).

Gln-167 provides a ligand contact to (2R)-2-phosphoglycerate. The Proton donor role is filled by Glu-209. 3 residues coordinate Mg(2+): Asp-246, Glu-289, and Asp-316. Positions 341, 370, 371, and 392 each coordinate (2R)-2-phosphoglycerate. Residue Lys-341 is the Proton acceptor of the active site.

Belongs to the enolase family. Component of the RNA degradosome, a multiprotein complex involved in RNA processing and mRNA degradation. It depends on Mg(2+) as a cofactor.

The protein resides in the cytoplasm. It is found in the secreted. It localises to the cell surface. It carries out the reaction (2R)-2-phosphoglycerate = phosphoenolpyruvate + H2O. It functions in the pathway carbohydrate degradation; glycolysis; pyruvate from D-glyceraldehyde 3-phosphate: step 4/5. Its function is as follows. Catalyzes the reversible conversion of 2-phosphoglycerate (2-PG) into phosphoenolpyruvate (PEP). It is essential for the degradation of carbohydrates via glycolysis. This chain is Enolase, found in Alcanivorax borkumensis (strain ATCC 700651 / DSM 11573 / NCIMB 13689 / SK2).